The sequence spans 344 residues: L-rhamnose-proton symporter (344 aa).

Transmembrane regions (helical) follow at residues 4–24, 38–58, 68–88, 101–121, 137–157, 175–195, 214–234, 259–279, 290–310, and 323–343; these read AITM…CFYA, WSVG…ALLL, FSLS…IGNI, MGIG…TPII, TLLG…AGQL, LVLA…MNAA, LPSY…FCFI, VLLS…YAWG, ISWM…GLVL, and VLSL…IGMA.

The protein belongs to the L-rhamnose transporter (TC 2.A.7.6) family.

It is found in the cell inner membrane. The enzyme catalyses L-rhamnopyranose(in) + H(+)(in) = L-rhamnopyranose(out) + H(+)(out). Functionally, uptake of L-rhamnose across the cytoplasmic membrane with the concomitant transport of protons into the cell (symport system). The sequence is that of L-rhamnose-proton symporter from Shigella sonnei (strain Ss046).